Here is a 75-residue protein sequence, read N- to C-terminus: Pro-glucagon (75 aa).

It belongs to the glucagon family.

Its subcellular location is the secreted. Its function is as follows. Plays a key role in glucose metabolism and homeostasis. Regulates blood glucose by increasing gluconeogenesis and decreasing glycolysis. The protein is Pro-glucagon (gcg) of Amia calva (Bowfin).